The sequence spans 123 residues: Large ribosomal subunit protein uL14 (123 aa).

It belongs to the universal ribosomal protein uL14 family. Part of the 50S ribosomal subunit. Forms a cluster with proteins L3 and L19. In the 70S ribosome, L14 and L19 interact and together make contacts with the 16S rRNA in bridges B5 and B8.

In terms of biological role, binds to 23S rRNA. Forms part of two intersubunit bridges in the 70S ribosome. The polypeptide is Large ribosomal subunit protein uL14 (Blochmanniella floridana).